An 880-amino-acid polypeptide reads, in one-letter code: Alanine--tRNA ligase (880 aa).

4 residues coordinate Zn(2+): H548, H552, C651, and H655.

The protein belongs to the class-II aminoacyl-tRNA synthetase family. Requires Zn(2+) as cofactor.

The protein resides in the cytoplasm. The enzyme catalyses tRNA(Ala) + L-alanine + ATP = L-alanyl-tRNA(Ala) + AMP + diphosphate. Its function is as follows. Catalyzes the attachment of alanine to tRNA(Ala) in a two-step reaction: alanine is first activated by ATP to form Ala-AMP and then transferred to the acceptor end of tRNA(Ala). Also edits incorrectly charged Ser-tRNA(Ala) and Gly-tRNA(Ala) via its editing domain. The chain is Alanine--tRNA ligase from Tropheryma whipplei (strain TW08/27) (Whipple's bacillus).